Here is a 373-residue protein sequence, read N- to C-terminus: Flagellar P-ring protein (373 aa).

The first 26 residues, 1 to 26 (MKLFFRFLTLVAVLAMSLADVAPAWA), serve as a signal peptide directing secretion.

It belongs to the FlgI family. As to quaternary structure, the basal body constitutes a major portion of the flagellar organelle and consists of four rings (L,P,S, and M) mounted on a central rod.

The protein localises to the periplasm. It localises to the bacterial flagellum basal body. In terms of biological role, assembles around the rod to form the L-ring and probably protects the motor/basal body from shearing forces during rotation. The chain is Flagellar P-ring protein from Rhizobium leguminosarum bv. trifolii (strain WSM2304).